Here is a 147-residue protein sequence, read N- to C-terminus: DNA-directed RNA polymerase I subunit rpa14 (147 aa).

The tract at residues 71-147 is disordered; the sequence is VQGPPTEELI…TQGVGEKEQS (77 aa). The segment covering 74 to 84 has biased composition (low complexity); the sequence is PPTEELIIPPE. The segment covering 87–111 has biased composition (basic and acidic residues); it reads LETKEEESLKHAREENDDLHLDKET. Residues 112–124 show a composition bias toward basic residues; it reads KKRLKKEKKKAAR. Residues 125-135 are compositionally biased toward basic and acidic residues; it reads REKEEARKAKA.

Component of the RNA polymerase I (Pol I) complex consisting of 14 subunits. Part of a Pol I subcomplex consisting of the subunits A14 and A43. Interacts with rpa43. Phosphorylated.

It localises to the nucleus. The protein resides in the nucleolus. Functionally, DNA-dependent RNA polymerase catalyzes the transcription of DNA into RNA using the four ribonucleoside triphosphates as substrates. Component of RNA polymerase I which synthesizes ribosomal RNA precursors. A14 seems to play a role in the stability of Pol I subunit A43 and association of rrn3 to Pol I. The polypeptide is DNA-directed RNA polymerase I subunit rpa14 (ker1) (Schizosaccharomyces pombe (strain 972 / ATCC 24843) (Fission yeast)).